A 54-amino-acid polypeptide reads, in one-letter code: Light-harvesting protein B-880 beta chain (54 aa).

The Cytoplasmic portion of the chain corresponds to 1 to 20 (AEDRSSLSGVSDAEAKEFHA). Residues histidine 19 and histidine 37 each coordinate a bacteriochlorophyll. A helical transmembrane segment spans residues 21-43 (LFVSSFTAFIVIAVLAHVLAWAW). Residues 44-54 (RPWIPGPKGWA) lie on the Periplasmic side of the membrane.

This sequence belongs to the antenna complex beta subunit family. As to quaternary structure, the core complex is formed by different alpha and beta chains, binding bacteriochlorophyll molecules, and arranged most probably in tetrameric structures disposed around the reaction center. The non-pigmented gamma chains may constitute additional components.

The protein resides in the cell inner membrane. Functionally, antenna complexes are light-harvesting systems, which transfer the excitation energy to the reaction centers. The protein is Light-harvesting protein B-880 beta chain of Rhodoblastus acidophilus (Rhodopseudomonas acidophila).